The chain runs to 139 residues: Transcription antitermination protein NusB (139 aa).

This sequence belongs to the NusB family.

Its function is as follows. Involved in transcription antitermination. Required for transcription of ribosomal RNA (rRNA) genes. Binds specifically to the boxA antiterminator sequence of the ribosomal RNA (rrn) operons. The chain is Transcription antitermination protein NusB from Enterobacter sp. (strain 638).